Reading from the N-terminus, the 359-residue chain is Insulin gene enhancer protein ISL-2 (359 aa).

LIM zinc-binding domains are found at residues 25–86 (AMCV…RLFG) and 87–149 (IKCA…LLER). The segment at 151 to 191 (AAGSPRSPGPLPGARGLHLPDAGSGRQPALRPHVHKQTEKT) is disordered. 2 positions are modified to phosphoserine: Ser154 and Ser157. Positions 191–250 (TTRVRTVLNEKQLHTLRTCYAANPRPDALMKEQLVEMTGLSPRVIRVWFQNKRCKDKKKS) form a DNA-binding region, homeobox. An LIM-binding domain (LID) region spans residues 272-301 (GTPLVAGSPIRHENAVQGSAVEVQTYQPPW). The residue at position 279 (Ser279) is a Phosphoserine. Low complexity predominate over residues 326–336 (ESGSLGNSSGS). Residues 326–359 (ESGSLGNSSGSDVTSLSSQLPDTPNSMVPSPVET) form a disordered region. A compositionally biased stretch (polar residues) spans 337–359 (DVTSLSSQLPDTPNSMVPSPVET).

As to quaternary structure, interacts with LHX4.

The protein localises to the nucleus. Transcriptional factor that defines subclasses of motoneurons that segregate into columns in the spinal cord and select distinct axon pathways. This Homo sapiens (Human) protein is Insulin gene enhancer protein ISL-2 (ISL2).